Consider the following 393-residue polypeptide: Staphopain B (393 aa).

An N-terminal signal peptide occupies residues Met1–Ala36. The propeptide occupies Asp37 to Glu219. Active-site residues include Cys243, His340, and Asn360.

It belongs to the peptidase C47 family. In terms of assembly, in the cytoplasm, prematurely activated/folded SspB forms a stable non-covalent complex with SspC. Proteolytically cleaved by staphylococcal serine protease (SspA).

It localises to the secreted. With respect to regulation, prematurely activated/folded staphopain B is inhibited by staphostatin B (SspC), which is probably required to protect staphylococcal cytoplasmic proteins from degradation by SspB. Also inactivated by E-64 and stimulated by EDTA. Cysteine protease that plays an important role in the inhibition of host innate immune response. Degrades host elastin, fibrogen, fibronectin and kininogen. Blocks phagocytosis of opsonised S.aureus by neutrophils and monocytes by inducing their death in a proteolytic activity-dependent manner. Decreases surface expression of the 'don't eat me' signal CD31 on neutrophils. Cleaves host galectin-3/LGALS3, thereby inhibiting the neutrophil-activating ability of the lectin. This chain is Staphopain B (sspB), found in Staphylococcus aureus (strain NCTC 8325 / PS 47).